The primary structure comprises 530 residues: Ankyrin repeat domain-containing protein 53 (530 aa).

Residues 1 to 15 show a composition bias toward low complexity; the sequence is MASAGSTARRAGSGS. The tract at residues 1–99 is disordered; it reads MASAGSTARR…PSPSKESDQT (99 aa). Residues 32 to 41 show a composition bias toward polar residues; that stretch reads PSGSMQQANK. ANK repeat units lie at residues 139 to 169, 173 to 206, and 210 to 239; these read KGFTAIHFAAQWGKLACLQVLVEEYKFPVDL, NSQTPLHLVIHRDNTTVALPCIYYLLEKGADLNA, and NGSTPLHLAARDGLLDCVKVLVQSGANVHA. Disordered stretches follow at residues 323 to 360 and 383 to 402; these read GHSLVSNTKQARATALSKTPEQRESQRSRSFHPSVDAR and PTMWNVSNNPARPPTTQISH. Composition is skewed to polar residues over residues 326–341 and 386–402; these read LVSNTKQARATALSKT and WNVSNNPARPPTTQISH.

In terms of assembly, interacts with PSRC1; recruited by PSRC1 to the spindle during mitosis. Post-translationally, phosphorylated during mitosis.

It is found in the cytoplasm. The protein localises to the cytoskeleton. Its subcellular location is the spindle. The protein resides in the spindle pole. Its function is as follows. Required for normal progression through mitosis. Involved in chromosome alignment and cytokinesis via regulation of microtubules polymerization. This chain is Ankyrin repeat domain-containing protein 53 (ANKRD53), found in Homo sapiens (Human).